The following is a 317-amino-acid chain: UAP56-interacting factor (317 aa).

Met1 carries the N-acetylmethionine modification. Positions 1–23 are disordered; that stretch reads MNRFGTRLVGATATTPPAPKARS. Thr14 is modified (phosphothreonine). Ser23 carries the post-translational modification Phosphoserine. The short motif at 26–44 is the UAP56-binding motif element; that stretch reads NLDKIDMSLDEIIKLNRKE. Residues Ser60 and Ser117 each carry the phosphoserine modification. Lys139 participates in a covalent cross-link: Glycyl lysine isopeptide (Lys-Gly) (interchain with G-Cter in SUMO1). Lys260 participates in a covalent cross-link: Glycyl lysine isopeptide (Lys-Gly) (interchain with G-Cter in SUMO2).

The protein belongs to the UIF family. Interacts with DDX39B/UAP56 and NXF1; interaction with DDX39B/UAP56 and NXF1 are mutually exclusive. Interacts with SSRP1; required for its recruitment to mRNAs. Interacts with CHTOP.

It is found in the nucleus. It localises to the nucleoplasm. Its subcellular location is the nucleus speckle. Required for mRNA export from the nucleus to the cytoplasm. Acts as an adapter that uses the DDX39B/UAP56-NFX1 pathway to ensure efficient mRNA export and delivering to the nuclear pore. Associates with spliced and unspliced mRNAs simultaneously with ALYREF/THOC4. The polypeptide is UAP56-interacting factor (Fyttd1) (Rattus norvegicus (Rat)).